The sequence spans 20 residues: Venom protease (20 aa).

It belongs to the peptidase S1 family. Contains 3 disulfide bonds. In terms of processing, N-glycosylated. As to expression, expressed by the venom duct.

The protein localises to the secreted. This Bombus terrestris (Buff-tailed bumblebee) protein is Venom protease.